A 483-amino-acid polypeptide reads, in one-letter code: Glycogen synthase (483 aa).

Lys-15 serves as a coordination point for ADP-alpha-D-glucose.

The protein belongs to the glycosyltransferase 1 family. Bacterial/plant glycogen synthase subfamily.

It catalyses the reaction [(1-&gt;4)-alpha-D-glucosyl](n) + ADP-alpha-D-glucose = [(1-&gt;4)-alpha-D-glucosyl](n+1) + ADP + H(+). The protein operates within glycan biosynthesis; glycogen biosynthesis. Its function is as follows. Synthesizes alpha-1,4-glucan chains using ADP-glucose. This Exiguobacterium sibiricum (strain DSM 17290 / CCUG 55495 / CIP 109462 / JCM 13490 / 255-15) protein is Glycogen synthase.